We begin with the raw amino-acid sequence, 3038 residues long: Lovastatin nonaketide synthase, polyketide synthase component (3038 aa).

Residues Asn-8–Glu-447 form the Ketosynthase family 3 (KS3) domain. Active-site for beta-ketoacyl synthase activity residues include Cys-181, His-320, and His-367. The interval Ile-562–Arg-889 is malonyl-CoA:ACP transacylase (MAT) domain. The For malonyltransferase activity role is filled by Ser-656. A lovC-binding region spans residues Ala-695–Arg-757. Positions His-953–Val-1089 are N-terminal hotdog fold. The interval His-953–Pro-1263 is dehydratase (DH) domain. Residues His-953–Ser-1267 enclose the PKS/mFAS DH domain. Catalysis depends on His-985, which acts as the Proton acceptor; for dehydratase activity. The C-terminal hotdog fold stretch occupies residues Glu-1107–Ser-1267. Asp-1174 serves as the catalytic Proton donor; for dehydratase activity. Positions Leu-1443–Gln-1543 are methyltransferase (CMet) domain. The tract at residues Thr-2139–Ala-2437 is ketoreductase (KR) domain. The Carrier domain maps to Gln-2463–Leu-2538. Ser-2498 is modified (O-(pantetheine 4'-phosphoryl)serine). The disordered stretch occupies residues Val-2546–Pro-2602. Acidic residues predominate over residues Ser-2583–Glu-2594. The tract at residues Pro-2602 to Leu-2952 is inactive Condensation domain.

In terms of assembly, homodimer. Each MAT domain from the lovB homodimer binds one lovC molecule to form the final active lovB-lovC megasynthase complex. It depends on pantetheine 4'-phosphate as a cofactor.

It carries out the reaction holo-[lovastatin nonaketide synthase] + 9 malonyl-CoA + S-adenosyl-L-methionine + 11 NADPH + 19 H(+) = dihydromonacolin L-[lovastatin nonaketide synthase] + S-adenosyl-L-homocysteine + 9 CO2 + 11 NADP(+) + 9 CoA + 6 H2O. Its pathway is polyketide biosynthesis; lovastatin biosynthesis. Functionally, lovastatin nonaketide synthase; part of the gene cluster that mediates the biosynthesis of lovastatin (also known as mevinolin, mevacor or monacolin K), a hypolipidemic inhibitor of (3S)-hydroxymethylglutaryl-coenzyme A (HMG-CoA) reductase (HMGR). The first step in the biosynthesis of lovastatin is the production of dihydromonacolin L acid by the lovastatin nonaketide synthase lovB and the trans-acting enoyl reductase lovC (called the lovB-lovC megasynthase complex) via condensation of one acetyl-CoA unit and 8 malonyl-CoA units. Dihydromonacolin L acid is released from lovB by the thioesterase lovG. Next, dihydromonacolin L acid is oxidized by the dihydromonacolin L monooxygenase lovA twice to form monacolin J acid. The 2-methylbutyrate moiety of lovastatin is synthesized by the lovastatin diketide synthase lovF via condensation of one acetyl-CoA unit and one malonyl-CoA unit. Finally, the covalent attachment of this moiety to monacolin J acid is catalyzed by the transesterase lovD to yield lovastatin. LovD has broad substrate specificity and can also convert monacolin J to simvastatin using alpha-dimethylbutanoyl-S-methyl-3-mercaptopropionate (DMB-S-MMP) as the thioester acyl donor, and can also catalyze the reverse reaction and function as hydrolase in vitro. LovD has much higher activity with LovF-bound 2-methylbutanoate than with free diketide substrates. This Aspergillus terreus (strain NIH 2624 / FGSC A1156) protein is Lovastatin nonaketide synthase, polyketide synthase component (lovB).